Consider the following 397-residue polypeptide: Gastric triacylglycerol lipase (397 aa).

Residues Met1–Cys19 form the signal peptide. A glycan (N-linked (GlcNAc...) asparagine) is linked at Asn33. The 300-residue stretch at Pro77–Trp376 folds into the AB hydrolase-1 domain. Ser171 serves as the catalytic Nucleophile. A disulfide bridge links Cys245 with Cys254. Residues Asn270 and Asn326 are each glycosylated (N-linked (GlcNAc...) asparagine). Residues Asp342 and His371 each act as charge relay system in the active site.

Belongs to the AB hydrolase superfamily. Lipase family.

The protein resides in the secreted. The enzyme catalyses a triacylglycerol + H2O = a diacylglycerol + a fatty acid + H(+). It carries out the reaction 1,2,3-tri-(9Z-octadecenoyl)-glycerol + H2O = 1,2-di-(9Z-octadecenoyl)-sn-glycerol + (9Z)-octadecenoate + H(+). The catalysed reaction is 1,2,3-trioctanoylglycerol + H2O = 1,2-dioctanoyl-sn-glycerol + octanoate + H(+). Inhibited by diethylp-nitrophenyl phosphate but not inhibited by thiol reagents 5,5'-dithiobis(2-nitrobenzoic acid) or 4,4'-dithiopyridine. Its function is as follows. Catalyzes the hydrolysis of triacylglycerols to yield free fatty acids, diacylglycerol, monoacylglycerol, and glycerol. Shows a preferential hydrolysis at the sn-3 position of triacylglycerol. The protein is Gastric triacylglycerol lipase (LIPF) of Bos taurus (Bovine).